A 730-amino-acid polypeptide reads, in one-letter code: ATP-binding cassette sub-family D member 1 (730 aa).

4 helical membrane passes run alanine 24–proline 44, phenylalanine 137–valine 157, alanine 169–isoleucine 189, and alanine 276–leucine 296. The region spanning threonine 136 to methionine 373 is the ABC transmembrane type-1 domain. Residues isoleucine 505–glutamine 727 enclose the ABC transporter domain. Glycine 538–serine 545 is an ATP binding site.

This sequence belongs to the ABC transporter superfamily. ABCD family. Peroxisomal fatty acyl CoA transporter (TC 3.A.1.203) subfamily.

It localises to the peroxisome membrane. The enzyme catalyses an acyl-CoA(out) + ATP + H2O = an acyl-CoA(in) + ADP + phosphate + H(+). Its function is as follows. Plays a role in the transport of free very-long-chain fatty acids (VLCFAs) as well as their CoA-esters across the peroxisomal membrane by acting as an ATP-specific binding subunit releasing ADP after ATP hydrolysis. Thus, plays a role in regulation of VLCFAs and energy metabolism namely, in the degradation and biosynthesis of fatty acids by beta-oxidation, mitochondrial function and microsomal fatty acid elongation. The protein is ATP-binding cassette sub-family D member 1 of Drosophila melanogaster (Fruit fly).